The sequence spans 100 residues: Large ribosomal subunit protein uL23 (100 aa).

It belongs to the universal ribosomal protein uL23 family. In terms of assembly, part of the 50S ribosomal subunit. Contacts protein L29, and trigger factor when it is bound to the ribosome.

One of the early assembly proteins it binds 23S rRNA. One of the proteins that surrounds the polypeptide exit tunnel on the outside of the ribosome. Forms the main docking site for trigger factor binding to the ribosome. The sequence is that of Large ribosomal subunit protein uL23 from Thermotoga sp. (strain RQ2).